The primary structure comprises 89 residues: Small ribosomal subunit protein uS15 (89 aa).

The protein belongs to the universal ribosomal protein uS15 family. In terms of assembly, part of the 30S ribosomal subunit. Forms a bridge to the 50S subunit in the 70S ribosome, contacting the 23S rRNA.

In terms of biological role, one of the primary rRNA binding proteins, it binds directly to 16S rRNA where it helps nucleate assembly of the platform of the 30S subunit by binding and bridging several RNA helices of the 16S rRNA. Functionally, forms an intersubunit bridge (bridge B4) with the 23S rRNA of the 50S subunit in the ribosome. This Dictyoglomus turgidum (strain DSM 6724 / Z-1310) protein is Small ribosomal subunit protein uS15.